Reading from the N-terminus, the 594-residue chain is Class I diterpene synthase TPS6, chloroplastic (594 aa).

Residues Asp330, Asp334, Asn474, Gln477, and Glu482 each contribute to the Mg(2+) site. The DDXXD motif motif lies at 330 to 334; the sequence is DDFFD.

This sequence belongs to the terpene synthase family. The cofactor is Mg(2+). As to expression, mostly expressed in trichomes of leaves and fruits.

The protein resides in the plastid. It is found in the chloroplast. It catalyses the reaction peregrinol diphosphate = labd-13(16),14-diene-9-ol + diphosphate. The enzyme catalyses 9alpha-copalyl diphosphate = syn-isopimara-7,15-diene + diphosphate. It participates in secondary metabolite biosynthesis; terpenoid biosynthesis. Functionally, involved in the biosynthesis of labdane-type diterpenoid including cleroda-dienols, and peregrinol lactones and furan derivatives, dopaminergic diterpenoids that can bind to dopamine receptors in the human pituitary gland, have probably ability to lower prolactin levels, and are used to treat menstrual cycle disorders (e.g. premenstrual syndrome and mastodynia). Terpene synthase the catalyzes the conversion of peregrinol diphosphate to labda-13(16),14-dien-9-ol, and of syn-copalyl diphosophate to dehydroabietadiene and syn-isopimara-7,15-diene. This Vitex agnus-castus (Chaste tree) protein is Class I diterpene synthase TPS6, chloroplastic.